Here is a 138-residue protein sequence, read N- to C-terminus: Mitochondrial import inner membrane translocase subunit tim-16 (138 aa).

The span at Thr-32–Thr-43 shows a compositional bias: low complexity. Disordered stretches follow at residues Thr-32 to Ala-58 and Leu-118 to Glu-138. The segment covering Gly-44–Ala-56 has biased composition (polar residues). Residues Glu-66 to Ser-119 form a J-like region.

It belongs to the TIM16/PAM16 family. In terms of assembly, probable component of the PAM complex at least composed of a mitochondrial HSP70 protein, GrpE, tim-44, tim-16 and tim-14. Associates with the TIM23 complex.

The protein resides in the mitochondrion inner membrane. Its function is as follows. Regulates ATP-dependent protein translocation into the mitochondrial matrix. The polypeptide is Mitochondrial import inner membrane translocase subunit tim-16 (Caenorhabditis briggsae).